The sequence spans 670 residues: DNA ligase (670 aa).

Residues Asp35 to Asp39, Ser84 to Leu85, and Glu116 contribute to the NAD(+) site. Residue Lys118 is the N6-AMP-lysine intermediate of the active site. Positions 139, 176, 293, and 317 each coordinate NAD(+). Zn(2+) contacts are provided by Cys411, Cys414, Cys429, and Cys435. A BRCT domain is found at Val592–Ser670.

The protein belongs to the NAD-dependent DNA ligase family. LigA subfamily. The cofactor is Mg(2+). Mn(2+) is required as a cofactor.

The enzyme catalyses NAD(+) + (deoxyribonucleotide)n-3'-hydroxyl + 5'-phospho-(deoxyribonucleotide)m = (deoxyribonucleotide)n+m + AMP + beta-nicotinamide D-nucleotide.. Functionally, DNA ligase that catalyzes the formation of phosphodiester linkages between 5'-phosphoryl and 3'-hydroxyl groups in double-stranded DNA using NAD as a coenzyme and as the energy source for the reaction. It is essential for DNA replication and repair of damaged DNA. This Coxiella burnetii (strain Dugway 5J108-111) protein is DNA ligase.